Here is a 462-residue protein sequence, read N- to C-terminus: MSPGQKEALPVADRTPPLGVEELHALVAAGDIDTVVLAFPDMQGRLQGKRFAARFFLDEVLEHGTEGCNYLLAVDADMNTVDGYAMSSWDRGYGDFAMRADPATLRRLPWNEGTAMAVADLAWEDGSPVLAAPRQILRRQLERLAGHGYTAQVGTELEFIVFRDTYEHAWDANYRGLTPANQYNVDYSVLGTGRVEPLLRRIRNEMAGAGLTVESAKGECNPGQHEIAFRYDEALVTCDQHAVYKTGAKEIAAQEGMSLTFMAKYNELEGNSCHIHLSLADADGRNAMAEGGGMSDVMRHFLAGQLVALREFSLLYAPHINSYKRFQPGSFAPTAVAWGHDNRTCALRVVGHGRSLRFENRLPGGDVNPYLAVAGLVAAGLHGIEQRLELPEPCPGNAYTADFAHVPTTLREAAELWENSTLAKAAFGDEVVAHYRNMARVELDAFDAAVTDWELRRSFERM.

The region spanning 30 to 126 (GDIDTVVLAF…AVADLAWEDG (97 aa)) is the GS beta-grasp domain. The GS catalytic domain maps to 133-462 (PRQILRRQLE…WELRRSFERM (330 aa)). 2 residues coordinate Mg(2+): E156 and E158. E214 contributes to the ATP binding site. The Mg(2+) site is built by E219 and E226. An L-glutamate-binding site is contributed by G270. H274 is a binding site for Mg(2+). ATP is bound at residue 276 to 278 (HLS). L-glutamate-binding residues include R325 and R343. ATP is bound by residues R343 and R348. A Mg(2+)-binding site is contributed by E359. R361 contributes to the L-glutamate binding site.

The protein belongs to the glutamine synthetase family. The cofactor is Mg(2+).

The catalysed reaction is ethanolamine + L-glutamate + ATP = gamma-L-glutamylethanolamide + ADP + phosphate + H(+). It participates in amine and polyamine degradation; ethanolamine degradation. With respect to regulation, very slightly decreased activity with glutamine synthetase (GS) inhibitor methionine sulfoximine (MSO). Its function is as follows. Involved in the catabolism of monoamine ethanolamine. Catalyzes the ATP-dependent gamma-glutamylation of ethanolamine. No activity with polyamines. No complementation of the L-glutamine auxotrophy of an E.coli glnA mutant. Enables survival of S.coelicolor under high local environmental ethanolamine conditions. May play a role during starvation conditions to limit intracellular ethanolamine concentration, which in excess is toxic to the cells. The polypeptide is Gamma-glutamylethanolamide synthetase GlnA4 (Streptomyces coelicolor (strain ATCC BAA-471 / A3(2) / M145)).